Here is a 154-residue protein sequence, read N- to C-terminus: uncharacterized protein (154 aa).

Transmembrane regions (helical) follow at residues 54 to 74 and 81 to 101; these read FLIT…IYLL and FAFV…FFLS.

The protein localises to the cell membrane. This is an uncharacterized protein from Mycoplasma genitalium (strain ATCC 33530 / DSM 19775 / NCTC 10195 / G37) (Mycoplasmoides genitalium).